A 126-amino-acid chain; its full sequence is UPF0102 protein P9303_16141 (126 aa).

The protein belongs to the UPF0102 family.

This is UPF0102 protein P9303_16141 from Prochlorococcus marinus (strain MIT 9303).